Reading from the N-terminus, the 259-residue chain is MNTQIIQLEDTKLEVNNLNFHYGDFHALKNINMRIAKHKVTAFIGPSGCGKSTLLRSFNRIFELYPNQYATGEIKLDGENLLTSPMDISLIRAKVGMVFQKPTPFPMSIYDNVAFGIRLFEKLSKADLNDRVEWALSKAALWNEVKDKLNQSGDSLSGGQQQRLCIARGIAIKPEVLLLDEPCSALDPISTAKIEELISELKHDYTVVMVTHNMQQAARCSDYTAFMYLGELIEFDETAKIFDKPRLQRTEDYIKGRMG.

In terms of domain architecture, ABC transporter spans 13–254; sequence LEVNNLNFHY…PRLQRTEDYI (242 aa). Residue 45–52 participates in ATP binding; that stretch reads GPSGCGKS.

Belongs to the ABC transporter superfamily. Phosphate importer (TC 3.A.1.7) family. The complex is composed of two ATP-binding proteins (PstB), two transmembrane proteins (PstC and PstA) and a solute-binding protein (PstS).

It is found in the cell inner membrane. It catalyses the reaction phosphate(out) + ATP + H2O = ADP + 2 phosphate(in) + H(+). Functionally, part of the ABC transporter complex PstSACB involved in phosphate import. Responsible for energy coupling to the transport system. The protein is Phosphate import ATP-binding protein PstB of Pasteurella multocida (strain Pm70).